The following is a 362-amino-acid chain: Methionine import ATP-binding protein MetN (362 aa).

The ABC transporter domain maps to 23 to 258 (VRLTDVKRRF…PQAEITGSLL (236 aa)). 55–62 (GRSGAGKS) contributes to the ATP binding site.

This sequence belongs to the ABC transporter superfamily. Methionine importer (TC 3.A.1.24) family. The complex is composed of two ATP-binding proteins (MetN), two transmembrane proteins (MetI) and a solute-binding protein (MetQ).

The protein resides in the cell inner membrane. The enzyme catalyses L-methionine(out) + ATP + H2O = L-methionine(in) + ADP + phosphate + H(+). The catalysed reaction is D-methionine(out) + ATP + H2O = D-methionine(in) + ADP + phosphate + H(+). In terms of biological role, part of the ABC transporter complex MetNIQ involved in methionine import. Responsible for energy coupling to the transport system. The polypeptide is Methionine import ATP-binding protein MetN (Rhizobium johnstonii (strain DSM 114642 / LMG 32736 / 3841) (Rhizobium leguminosarum bv. viciae)).